The sequence spans 110 residues: NADH dehydrogenase [ubiquinone] iron-sulfur protein 6, mitochondrial (110 aa).

Residues 1–22 constitute a mitochondrion transit peptide; the sequence is MASNLLKALIRSQILPSSRRNF.

The protein belongs to the complex I NDUFS6 subunit family. In terms of assembly, complex I is composed of at least 49 different subunits. This is a component of the iron-sulfur (IP) fragment of the enzyme.

It is found in the mitochondrion inner membrane. Accessory subunit of the mitochondrial membrane respiratory chain NADH dehydrogenase (Complex I), that is believed not to be involved in catalysis. Complex I functions in the transfer of electrons from NADH to the respiratory chain. The immediate electron acceptor for the enzyme is believed to be ubiquinone. The chain is NADH dehydrogenase [ubiquinone] iron-sulfur protein 6, mitochondrial from Arabidopsis thaliana (Mouse-ear cress).